The chain runs to 123 residues: Small ribosomal subunit protein uS12c (123 aa).

The interval 103 to 123 (AAGVKNRKQSRSKYGAKKPKE) is disordered. Over residues 107 to 123 (KNRKQSRSKYGAKKPKE) the composition is skewed to basic residues.

It belongs to the universal ribosomal protein uS12 family. In terms of assembly, part of the 30S ribosomal subunit.

It is found in the plastid. Its subcellular location is the chloroplast. Its function is as follows. With S4 and S5 plays an important role in translational accuracy. Located at the interface of the 30S and 50S subunits. In Guillardia theta (Cryptophyte), this protein is Small ribosomal subunit protein uS12c (rps12).